A 173-amino-acid polypeptide reads, in one-letter code: Trafficking regulator of GLUT4 1 (173 aa).

The segment covering 1 to 17 (MANPVQPQLQDPGSTSP) has biased composition (polar residues). A disordered region spans residues 1 to 22 (MANPVQPQLQDPGSTSPLDLPE). At 1–102 (MANPVQPQLQ…QDQEAPKDYL (102 aa)) the chain is on the cytoplasmic side. A phosphoserine mark is found at Ser16, Ser43, Ser45, Ser70, Ser84, and Ser85. Residues 103-123 (VLAIASCFCPVWPLNLIPLIF) constitute an intramembrane region (helical). Over 124-150 (SIMSRSSVQQGDLDGARRLGRLARLLS) the chain is Cytoplasmic. Residues 151-171 (ITFIILGIVIIIVAVTVNFTV) form a helical membrane-spanning segment. Over 172–173 (PK) the chain is Extracellular.

Belongs to the CD225/Dispanin family. Interacts with SLC2A4; the interaction is required for proper SLC2A4 reacycling after insulin stimulation. Present in adipose tissue and undetectable in other tissues (at protein level).

It localises to the cell membrane. The protein localises to the endomembrane system. Its subcellular location is the cytoplasm. It is found in the perinuclear region. Its function is as follows. Regulates insulin-mediated adipose tissue glucose uptake and transport by modulation of SLC2A4 recycling. Not required for SLC2A4 membrane fusion upon an initial stimulus, but rather is necessary for proper protein recycling during prolonged insulin stimulation. The sequence is that of Trafficking regulator of GLUT4 1 from Rattus norvegicus (Rat).